The following is a 222-amino-acid chain: Histone H1.5 (222 aa).

The segment covering 1 to 16 has biased composition (low complexity); the sequence is MSETAPAETTAPAPVE. The tract at residues 1 to 55 is disordered; sequence MSETAPAETTAPAPVEKSPAKKKTKKAGAAKRKATGPPVSELITKAVSASKERGG. N-acetylserine is present on serine 2. Position 2 is a phosphoserine (serine 2). Lysine 17 carries the N6-acetyllysine modification. Serine 18 carries the phosphoserine modification. A compositionally biased stretch (basic residues) spans 20–34; that stretch reads AKKKTKKAGAAKRKA. Residue lysine 26 is modified to N6-methyllysine. Lysine 33 is subject to N6-(beta-hydroxybutyryl)lysine; alternate. At lysine 33 the chain carries N6-succinyllysine; alternate. Threonine 35 is modified (phosphothreonine). The H15 domain maps to 35-108; sequence TGPPVSELIT…GASGSFKLNK (74 aa). Position 45 is an N6-acetyllysine (lysine 45). Position 51 is an N6-(beta-hydroxybutyryl)lysine (lysine 51). Arginine 53 is modified (citrulline). Lysine 63 is subject to N6-(beta-hydroxybutyryl)lysine. Lysine 74 is subject to N6-acetyllysine. 3 positions are modified to N6-(beta-hydroxybutyryl)lysine: lysine 84, lysine 89, and lysine 105. Positions 94-222 are disordered; that stretch reads QTKGTGASGS…KVKKAVSKKK (129 aa). Residues 118–129 show a composition bias toward basic residues; that stretch reads KAKKTGAAKAKK. A phosphothreonine mark is found at threonine 134 and threonine 151. A compositionally biased stretch (basic residues) spans 136–157; sequence KKPKKTAGAKKTVKKTPKKAKK. An N6-acetyllysine modification is found at lysine 164. The segment covering 165-183 has biased composition (basic residues); that stretch reads KVTKSPKKAKAAAKPKKAT. Phosphoserine occurs at positions 169 and 185. The segment covering 190–222 has biased composition (basic residues); that stretch reads KAVKSKASKPKVTKPKAAKPKAAKVKKAVSKKK.

This sequence belongs to the histone H1/H5 family. In terms of assembly, interacts with MSX1. H1 histones are progressively phosphorylated during the cell cycle, becoming maximally phosphorylated during late G2 phase and M phase, and being dephosphorylated sharply thereafter. In terms of processing, citrullination at Arg-53 (H1R54ci) by PADI4 takes place within the DNA-binding site of H1 and results in its displacement from chromatin and global chromatin decondensation, thereby promoting pluripotency and stem cell maintenance.

Its subcellular location is the nucleus. The protein localises to the chromosome. Its function is as follows. Histone H1 protein binds to linker DNA between nucleosomes forming the macromolecular structure known as the chromatin fiber. Histones H1 are necessary for the condensation of nucleosome chains into higher-order structured fibers. Also acts as a regulator of individual gene transcription through chromatin remodeling, nucleosome spacing and DNA methylation. The protein is Histone H1.5 (H1-5) of Rattus norvegicus (Rat).